Here is a 205-residue protein sequence, read N- to C-terminus: ATP phosphoribosyltransferase (205 aa).

It belongs to the ATP phosphoribosyltransferase family. Short subfamily. As to quaternary structure, heteromultimer composed of HisG and HisZ subunits.

The protein resides in the cytoplasm. The catalysed reaction is 1-(5-phospho-beta-D-ribosyl)-ATP + diphosphate = 5-phospho-alpha-D-ribose 1-diphosphate + ATP. It participates in amino-acid biosynthesis; L-histidine biosynthesis; L-histidine from 5-phospho-alpha-D-ribose 1-diphosphate: step 1/9. Catalyzes the condensation of ATP and 5-phosphoribose 1-diphosphate to form N'-(5'-phosphoribosyl)-ATP (PR-ATP). Has a crucial role in the pathway because the rate of histidine biosynthesis seems to be controlled primarily by regulation of HisG enzymatic activity. This chain is ATP phosphoribosyltransferase, found in Leptospira interrogans serogroup Icterohaemorrhagiae serovar Lai (strain 56601).